A 432-amino-acid polypeptide reads, in one-letter code: Glutamyl-tRNA reductase (432 aa).

Residues 55-58 (TCNR), serine 114, 119-121 (ETQ), and glutamine 125 each bind substrate. Cysteine 56 acts as the Nucleophile in catalysis. 194 to 199 (GAGEMI) is an NADP(+) binding site.

It belongs to the glutamyl-tRNA reductase family. In terms of assembly, homodimer.

The enzyme catalyses (S)-4-amino-5-oxopentanoate + tRNA(Glu) + NADP(+) = L-glutamyl-tRNA(Glu) + NADPH + H(+). It functions in the pathway porphyrin-containing compound metabolism; protoporphyrin-IX biosynthesis; 5-aminolevulinate from L-glutamyl-tRNA(Glu): step 1/2. In terms of biological role, catalyzes the NADPH-dependent reduction of glutamyl-tRNA(Glu) to glutamate 1-semialdehyde (GSA). This chain is Glutamyl-tRNA reductase, found in Burkholderia ambifaria (strain MC40-6).